The primary structure comprises 459 residues: Asperlicin C monooxygenase (459 aa).

The FAD site is built by D49, A62, and R121. R199 is an active-site residue. FAD is bound by residues D323 and A336.

The protein belongs to the paxM FAD-dependent monooxygenase family. It depends on FAD as a cofactor.

It carries out the reaction asperlicin C + NADPH + O2 + H(+) = asperlicin E + NADP(+) + H2O. It catalyses the reaction asperlicin C + NADH + O2 + H(+) = asperlicin E + NAD(+) + H2O. Catalyzes the conversion of asperlicin A to form asperlicin E, a potent cholecystokinin receptor CCK(A) antagonist. This is Asperlicin C monooxygenase from Petromyces alliaceus (Aspergillus alliaceus).